Reading from the N-terminus, the 312-residue chain is Protoheme IX farnesyltransferase (312 aa).

The next 9 helical transmembrane spans lie at 29-49 (VMSLVVFTGLVGLVVAPGHMN), 50-70 (PVLAAISILCVAVGAGASGAL), 90-110 (IPAGIIAPNQVLAFGLTLSAF), 117-137 (LMVNWLSAALLAFTIFFYAVV), 150-170 (IVIGGAAGAFPPMIGWAAATG), 177-197 (VVLFMIIFLWTPPHFWALSLF), 223-243 (ALFYSIIMAPVGVLPWVLGFA), 248-268 (GAISTLLGLAFVYYAWRMWVA), and 292-312 (LFAVLLVEALVMKALIAFGGF).

The protein belongs to the UbiA prenyltransferase family. Protoheme IX farnesyltransferase subfamily.

It localises to the cell inner membrane. It catalyses the reaction heme b + (2E,6E)-farnesyl diphosphate + H2O = Fe(II)-heme o + diphosphate. Its pathway is porphyrin-containing compound metabolism; heme O biosynthesis; heme O from protoheme: step 1/1. In terms of biological role, converts heme B (protoheme IX) to heme O by substitution of the vinyl group on carbon 2 of heme B porphyrin ring with a hydroxyethyl farnesyl side group. This Brucella anthropi (strain ATCC 49188 / DSM 6882 / CCUG 24695 / JCM 21032 / LMG 3331 / NBRC 15819 / NCTC 12168 / Alc 37) (Ochrobactrum anthropi) protein is Protoheme IX farnesyltransferase.